The sequence spans 1188 residues: NF-X1-type zinc finger protein NFXL1 (1188 aa).

The span at 1–15 shows a compositional bias: basic and acidic residues; that stretch reads MSFQVRRDRSDDRSH. Disordered stretches follow at residues 1-52 and 65-195; these read MSFQ…ETLD and QHNA…VAKE. Composition is skewed to polar residues over residues 19–34 and 168–186; these read HQQT…SSVV and ASGT…TRPV. Residues 223–279 form an RING-type; degenerate zinc finger; sequence CMICYDKVGRSANIWSCSSCYSIFHINCIKRWARAPTSVDLLAEKNQGDNWRCPGCQ. NF-X1-type zinc fingers lie at residues 335–353, 390–409, 454–473, 513–532, 572–607, 611–630, 668–686, 721–751, and 760–781; these read CPHV…PCKA, CGRH…PCQV, CGNH…DCDL, CRLH…PCLV, CGRH…PCQK, CGQH…PCLE, CGHS…PCST, CGMH…TCRQ, and CRHT…RCEF. One can recognise an R3H domain in the interval 894-963; that stretch reads PKWVLAVEER…KRFTVVHVTA (70 aa). Residues 1100–1188 form a disordered region; it reads SDDSWGAEDS…VVDDWEKVCE (89 aa). Polar residues-rich tracts occupy residues 1126–1138 and 1159–1169; these read AKSN…SVNR and EESSSSKTTGK.

The protein belongs to the NFX1 family. As to expression, expressed in seedlings, roots, stems, leaves, buds, flowers and siliques.

The protein localises to the nucleus. The protein operates within protein modification; protein ubiquitination. In terms of biological role, mediates E2-dependent ubiquitination. Confers resistance to osmotic stress such as high salinity. Promotes H(2)O(2) production. Negative regulator of some defense-related genes via an salicylic acid (SA)-dependent signaling pathway. Confers susceptibility to the compatible phytopathogen Pseudomonas syringae pv. tomato strain DC3000 (Pst DC3000). Mediates resistance to type A trichothecenes (phytotoxins produced by phytopathogenic fungi). The polypeptide is NF-X1-type zinc finger protein NFXL1 (NFXL1) (Arabidopsis thaliana (Mouse-ear cress)).